A 698-amino-acid polypeptide reads, in one-letter code: Elongation factor G (698 aa).

Residues 10–285 form the tr-type G domain; the sequence is DKTRNIGIMA…AVVDYLPSPL (276 aa). Residues 19 to 26, 83 to 87, and 137 to 140 contribute to the GTP site; these read AHIDAGKT, DTPGH, and NKMD.

Belongs to the TRAFAC class translation factor GTPase superfamily. Classic translation factor GTPase family. EF-G/EF-2 subfamily.

The protein localises to the cytoplasm. Catalyzes the GTP-dependent ribosomal translocation step during translation elongation. During this step, the ribosome changes from the pre-translocational (PRE) to the post-translocational (POST) state as the newly formed A-site-bound peptidyl-tRNA and P-site-bound deacylated tRNA move to the P and E sites, respectively. Catalyzes the coordinated movement of the two tRNA molecules, the mRNA and conformational changes in the ribosome. The chain is Elongation factor G from Lactiplantibacillus plantarum (strain ATCC BAA-793 / NCIMB 8826 / WCFS1) (Lactobacillus plantarum).